The sequence spans 195 residues: 3-isopropylmalate dehydratase small subunit (195 aa).

Belongs to the LeuD family. LeuD type 1 subfamily. In terms of assembly, heterodimer of LeuC and LeuD.

The enzyme catalyses (2R,3S)-3-isopropylmalate = (2S)-2-isopropylmalate. It functions in the pathway amino-acid biosynthesis; L-leucine biosynthesis; L-leucine from 3-methyl-2-oxobutanoate: step 2/4. Functionally, catalyzes the isomerization between 2-isopropylmalate and 3-isopropylmalate, via the formation of 2-isopropylmaleate. This is 3-isopropylmalate dehydratase small subunit from Karelsulcia muelleri (strain GWSS) (Sulcia muelleri).